The chain runs to 449 residues: MITDQNSKPQQGELPTTHIDALTNSFSQFLRIEATSGAVLLLATVVALTLSNSPWSDGFRSLWETPIGIQIGAFQFLRSLRDLINDGLMTLFFFIVALEIKREVVLGELRNPRMVALSVVAAAGGMLVPMGLYLALQHGQPGQHGWGVVMPTDTAFVIGCLALLGSRVPPGLRVFLLSLAVVDDLAAILVVAVGYSRSIDWTALALGAVGLVIIRGMALLGVRNIRVYFLAGAIIWLAVNASGIHATIVGVILGLMTPTAGWVSDQRLGEILRKVLSYPPGDHWSGDTEDNRALQVAGIAVRETLSPVERLEAMLHPWVAFGVMPLFALANAGVPITIKGLINPVSLAVMAGFVLGKPIGVTAFAWLGVRTGVAIRPAGLTWGGLVGGALLTGIGFTMALFIAGQAFQDATLNAAKLGILAASVVSSVAGLTLLCALPRSDGTLDADFH.

The next 11 membrane-spanning stretches (helical) occupy residues 32-52, 87-107, 114-134, 145-165, 174-194, 202-222, 233-253, 318-338, 347-367, 382-402, and 417-437; these read IEAT…TLSN, GLMT…VVLG, MVAL…GLYL, GWGV…ALLG, VFLL…VAVG, TALA…LLGV, AIIW…GVIL, WVAF…PITI, LAVM…FAWL, WGGL…ALFI, and LGIL…LCAL.

This sequence belongs to the NhaA Na(+)/H(+) (TC 2.A.33) antiporter family.

It localises to the cell inner membrane. The enzyme catalyses Na(+)(in) + 2 H(+)(out) = Na(+)(out) + 2 H(+)(in). Functionally, na(+)/H(+) antiporter that extrudes sodium in exchange for external protons. This is Na(+)/H(+) antiporter NhaA 2 from Acidiphilium cryptum (strain JF-5).